A 398-amino-acid chain; its full sequence is Arylacetamide deacetylase (398 aa).

Residues 1–5 (MGRTI) lie on the Cytoplasmic side of the membrane. The chain crosses the membrane as a helical; Signal-anchor for type II membrane protein span at residues 6–26 (FLLISVVLVAYYIYIPLPDDI). The Lumenal segment spans residues 27-398 (EEPWKIILGN…QYLNWLHKNL (372 aa)). The N-linked (GlcNAc...) asparagine glycan is linked to Asn-77. The short motif at 110 to 112 (HGG) is the Involved in the stabilization of the negatively charged intermediate by the formation of the oxyanion hole element. Cys-115 and Cys-339 are oxidised to a cystine. Ser-188 is an active-site residue. Asn-192, Asn-281, and Asn-324 each carry an N-linked (GlcNAc...) asparagine glycan. Active-site residues include Asp-342 and His-372.

Belongs to the 'GDXG' lipolytic enzyme family. Highest levels in liver with lower levels in jejunum, kidney and testis.

Its subcellular location is the endoplasmic reticulum membrane. The protein resides in the microsome membrane. It catalyses the reaction a triacylglycerol + H2O = a diacylglycerol + a fatty acid + H(+). Its function is as follows. Displays cellular triglyceride lipase activity in liver, increases the levels of intracellular fatty acids derived from the hydrolysis of newly formed triglyceride stores and plays a role in very low-density lipoprotein assembly. Displays serine esterase activity in liver. Deacetylates a variety of arylacetamide substrates, including xenobiotic compounds and procarcinogens, converting them to the primary arylamide compounds and increasing their toxicity. The polypeptide is Arylacetamide deacetylase (Aadac) (Rattus norvegicus (Rat)).